Here is a 533-residue protein sequence, read N- to C-terminus: Beta-1,4 N-acetylgalactosaminyltransferase 1 (533 aa).

At 1-7 (MWLGRRA) the chain is on the cytoplasmic side. Residues 8–25 (LCALVLLLACASLGLLYA) form a helical; Signal-anchor for type II membrane protein membrane-spanning segment. Topologically, residues 26–533 (STRDAPGLRL…KHRLQCMTSQ (508 aa)) are lumenal. Asn-79, Asn-179, and Asn-274 each carry an N-linked (GlcNAc...) asparagine glycan. A disulfide bridge connects residues Cys-429 and Cys-476.

It belongs to the glycosyltransferase 2 family. Homodimer; disulfide-linked.

The protein localises to the golgi apparatus membrane. It catalyses the reaction a ganglioside GM3 (d18:1(4E)) + UDP-N-acetyl-alpha-D-galactosamine = a ganglioside GM2 (d18:1(4E)) + UDP + H(+). The catalysed reaction is a ganglioside GM3 + UDP-N-acetyl-alpha-D-galactosamine = a ganglioside GM2 + UDP + H(+). The enzyme catalyses a ganglioside GD3 + UDP-N-acetyl-alpha-D-galactosamine = a ganglioside GD2 + UDP + H(+). It carries out the reaction a ganglioside GD3 (d18:1(4E)) + UDP-N-acetyl-alpha-D-galactosamine = a ganglioside GD2 (d18:1(4E)) + UDP + H(+). It catalyses the reaction a beta-D-Gal-(1-&gt;4)-beta-D-Glc-(1&lt;-&gt;1)-Cer(d18:1(4E)) + UDP-N-acetyl-alpha-D-galactosamine = a ganglioside GA2 (d18:1(4E)) + UDP + H(+). The catalysed reaction is a ganglioside GD1a + UDP-N-acetyl-alpha-D-galactosamine = a ganglioside GalNAc-GD1a + UDP + H(+). The enzyme catalyses a ganglioside GT3 (d18:1(4E)) + UDP-N-acetyl-alpha-D-galactosamine = a ganglioside GT2 (d18:1(4E)) + UDP + H(+). It carries out the reaction a beta-D-galactosyl-(1-&gt;4)-beta-D-glucosyl-(1&lt;-&gt;1)-ceramide + UDP-N-acetyl-alpha-D-galactosamine = a ganglioside GA2 + UDP + H(+). It catalyses the reaction a neolactoside IV(3)-alpha-NeuGc-nLc4Cer + UDP-N-acetyl-alpha-D-galactosamine = a neolactoside IV(4)-beta-GalNAc-IV(3)-alpha-NeuGc-nLc4Cer + UDP + H(+). It participates in sphingolipid metabolism. In terms of biological role, involved in the biosynthesis of gangliosides GM2, GD2, GT2 and GA2 from GM3, GD3, GT3 and GA3, respectively. This is Beta-1,4 N-acetylgalactosaminyltransferase 1 from Homo sapiens (Human).